Here is a 453-residue protein sequence, read N- to C-terminus: uncharacterized protein (453 aa).

This is an uncharacterized protein from Magallana gigas (Pacific oyster).